Consider the following 283-residue polypeptide: Elongation factor Ts (283 aa).

Positions Thr80 to Val83 are involved in Mg(2+) ion dislocation from EF-Tu.

The protein belongs to the EF-Ts family.

It is found in the cytoplasm. Its function is as follows. Associates with the EF-Tu.GDP complex and induces the exchange of GDP to GTP. It remains bound to the aminoacyl-tRNA.EF-Tu.GTP complex up to the GTP hydrolysis stage on the ribosome. This Salmonella paratyphi A (strain ATCC 9150 / SARB42) protein is Elongation factor Ts.